A 439-amino-acid polypeptide reads, in one-letter code: DNA damage-inducible protein 1 (439 aa).

A Ubiquitin-like domain is found at 1–82 (MQITIAIQDT…LALHVRETQR (82 aa)). A disordered region spans residues 82-101 (RATAVPESQQGRPAAPPQQD). Residue aspartate 220 is part of the active site. The disordered stretch occupies residues 333–398 (QDEPTIEGPG…PAPRAPQARS (66 aa)). Composition is skewed to low complexity over residues 364–375 (GQAGPSTAAQPG) and 383–398 (PASA…QARS). In terms of domain architecture, UBA spans 398–438 (SFPREHIEQLVALGADEQKAIRALEATDGNVEYAASLIFEG).

Belongs to the DDI1 family. In terms of assembly, binds ubiquitin and polyubiquitinated proteins.

The protein resides in the cytoplasm. In terms of biological role, probable aspartic protease. May be involved in the regulation of exocytosis. Acts as a linker between the 19S proteasome and polyubiquitinated proteins via UBA domain interactions with ubiquitin for their subsequent degradation. Required for S-phase checkpoint control. The protein is DNA damage-inducible protein 1 (ddi-1) of Neurospora crassa (strain ATCC 24698 / 74-OR23-1A / CBS 708.71 / DSM 1257 / FGSC 987).